We begin with the raw amino-acid sequence, 588 residues long: Aspartate--tRNA ligase (588 aa).

Glutamate 177 lines the L-aspartate pocket. An aspartate region spans residues glutamine 201 to lysine 204. An L-aspartate-binding site is contributed by arginine 223. ATP contacts are provided by residues arginine 223–glutamate 225 and glutamine 232. L-aspartate is bound at residue histidine 451. Position 485 (glutamate 485) interacts with ATP. Arginine 492 lines the L-aspartate pocket. Glycine 537–arginine 540 is an ATP binding site.

The protein belongs to the class-II aminoacyl-tRNA synthetase family. Type 1 subfamily. Homodimer.

Its subcellular location is the cytoplasm. The catalysed reaction is tRNA(Asp) + L-aspartate + ATP = L-aspartyl-tRNA(Asp) + AMP + diphosphate. Catalyzes the attachment of L-aspartate to tRNA(Asp) in a two-step reaction: L-aspartate is first activated by ATP to form Asp-AMP and then transferred to the acceptor end of tRNA(Asp). The sequence is that of Aspartate--tRNA ligase from Staphylococcus haemolyticus (strain JCSC1435).